We begin with the raw amino-acid sequence, 259 residues long: Thiazole synthase (259 aa).

The active-site Schiff-base intermediate with DXP is the lysine 100. Residues glycine 161, 187-188 (AG), and 209-210 (NT) each bind 1-deoxy-D-xylulose 5-phosphate.

Belongs to the ThiG family. In terms of assembly, homotetramer. Forms heterodimers with either ThiH or ThiS.

The protein resides in the cytoplasm. The enzyme catalyses [ThiS sulfur-carrier protein]-C-terminal-Gly-aminoethanethioate + 2-iminoacetate + 1-deoxy-D-xylulose 5-phosphate = [ThiS sulfur-carrier protein]-C-terminal Gly-Gly + 2-[(2R,5Z)-2-carboxy-4-methylthiazol-5(2H)-ylidene]ethyl phosphate + 2 H2O + H(+). Its pathway is cofactor biosynthesis; thiamine diphosphate biosynthesis. In terms of biological role, catalyzes the rearrangement of 1-deoxy-D-xylulose 5-phosphate (DXP) to produce the thiazole phosphate moiety of thiamine. Sulfur is provided by the thiocarboxylate moiety of the carrier protein ThiS. In vitro, sulfur can be provided by H(2)S. In Methylobacillus flagellatus (strain ATCC 51484 / DSM 6875 / VKM B-1610 / KT), this protein is Thiazole synthase.